A 293-amino-acid polypeptide reads, in one-letter code: Acidic endochitinase SE2 (293 aa).

Positions 1–25 are cleaved as a signal peptide; the sequence is MAAKIVSVLFLISLLIFASFESSHG. The region spanning 26 to 293 is the GH18 domain; the sequence is SQIVIYWGQN…GYSSAIKSSV (268 aa). 2 disulfide bridges follow: cysteine 45-cysteine 91 and cysteine 75-cysteine 81. Catalysis depends on glutamate 151, which acts as the Proton donor. Cysteine 183 and cysteine 212 form a disulfide bridge.

This sequence belongs to the glycosyl hydrolase 18 family. Chitinase class II subfamily. In terms of tissue distribution, accumulates in leaves during infection.

Its subcellular location is the secreted. It is found in the extracellular space. It catalyses the reaction Random endo-hydrolysis of N-acetyl-beta-D-glucosaminide (1-&gt;4)-beta-linkages in chitin and chitodextrins.. In terms of biological role, this protein functions as a defense against chitin containing fungal pathogens. This endochitinase also exhibits exochitinase activity, i.e. it is capable of hydrolyzing chito-oligosaccharides, including chitobiose. This chain is Acidic endochitinase SE2 (SE2), found in Beta vulgaris (Sugar beet).